A 445-amino-acid chain; its full sequence is Tubulin beta-3 chain (445 aa).

Residues Gln-11, Glu-69, Ser-138, Gly-142, Thr-143, Gly-144, Asn-204, and Asn-226 each contribute to the GTP site. Glu-69 lines the Mg(2+) pocket. The tract at residues 421–445 (EYQQYQDATADEEEEYDEEEEEEAA) is disordered. Residues 429–445 (TADEEEEYDEEEEEEAA) show a composition bias toward acidic residues.

Belongs to the tubulin family. In terms of assembly, dimer of alpha and beta chains. A typical microtubule is a hollow water-filled tube with an outer diameter of 25 nm and an inner diameter of 15 nM. Alpha-beta heterodimers associate head-to-tail to form protofilaments running lengthwise along the microtubule wall with the beta-tubulin subunit facing the microtubule plus end conferring a structural polarity. Microtubules usually have 13 protofilaments but different protofilament numbers can be found in some organisms and specialized cells. Mg(2+) serves as cofactor.

The protein resides in the cytoplasm. The protein localises to the cytoskeleton. Tubulin is the major constituent of microtubules, a cylinder consisting of laterally associated linear protofilaments composed of alpha- and beta-tubulin heterodimers. Microtubules grow by the addition of GTP-tubulin dimers to the microtubule end, where a stabilizing cap forms. Below the cap, tubulin dimers are in GDP-bound state, owing to GTPase activity of alpha-tubulin. The polypeptide is Tubulin beta-3 chain (TUBB3) (Triticum aestivum (Wheat)).